A 921-amino-acid chain; its full sequence is Isoleucine--tRNA ligase (921 aa).

The 'HIGH' region motif lies at 59 to 69 (PYANGHLHIGH). E569 serves as a coordination point for L-isoleucyl-5'-AMP. Positions 610 to 614 (KMSKS) match the 'KMSKS' region motif. Residue K613 coordinates ATP. 4 residues coordinate Zn(2+): C894, C897, C909, and C912.

It belongs to the class-I aminoacyl-tRNA synthetase family. IleS type 1 subfamily. Monomer. It depends on Zn(2+) as a cofactor.

Its subcellular location is the cytoplasm. It catalyses the reaction tRNA(Ile) + L-isoleucine + ATP = L-isoleucyl-tRNA(Ile) + AMP + diphosphate. Catalyzes the attachment of isoleucine to tRNA(Ile). As IleRS can inadvertently accommodate and process structurally similar amino acids such as valine, to avoid such errors it has two additional distinct tRNA(Ile)-dependent editing activities. One activity is designated as 'pretransfer' editing and involves the hydrolysis of activated Val-AMP. The other activity is designated 'posttransfer' editing and involves deacylation of mischarged Val-tRNA(Ile). The polypeptide is Isoleucine--tRNA ligase (Campylobacter lari (strain RM2100 / D67 / ATCC BAA-1060)).